Consider the following 125-residue polypeptide: Cystatin-like cysteine protease inhibitor EPIC2A (125 aa).

Positions 1 to 21 (MSFLRPTLALLAVTALVTTSA) are cleaved as a signal peptide. A glycan (N-linked (GlcNAc...) asparagine) is linked at N45. A Secondary area of contact motif is present at residues 68-72 (QVVSG).

The protein belongs to the cystatin family.

The protein resides in the secreted. Its function is as follows. Secreted effector that interacts with and inhibits host apoplastic pathogenesis-related papain-like cysteine proteases. Inhibition of host proteases by a pathogen extracellular protease inhibitor forms a specific type of defense-counterdefense mechanism between plants and microbial pathogens. The polypeptide is Cystatin-like cysteine protease inhibitor EPIC2A (Phytophthora infestans (strain T30-4) (Potato late blight agent)).